The chain runs to 189 residues: MGLLDAGITQHNVLITSVDNVLNWARLSSLWPMGFGLACCAIEMMATNASNYDLERFGIFPRSSPRQSDLMIVAGTVTMKMAERVIRLYEQMPEPRYVLSMGSCSNCGGPYWEHGYHVLKGVDRVIPVDVFVPGCPPRPESLIGGLMKVQELIRMEQIGLSRADALKKLAEKSVDPQFVIERERKAAGA.

Residues cysteine 39, cysteine 40, cysteine 104, and cysteine 135 each coordinate [4Fe-4S] cluster.

The protein belongs to the complex I 20 kDa subunit family. NDH-1 is composed of 14 different subunits. Subunits NuoB, C, D, E, F, and G constitute the peripheral sector of the complex. [4Fe-4S] cluster serves as cofactor.

Its subcellular location is the cell inner membrane. It catalyses the reaction a quinone + NADH + 5 H(+)(in) = a quinol + NAD(+) + 4 H(+)(out). Functionally, NDH-1 shuttles electrons from NADH, via FMN and iron-sulfur (Fe-S) centers, to quinones in the respiratory chain. The immediate electron acceptor for the enzyme in this species is believed to be a menaquinone. Couples the redox reaction to proton translocation (for every two electrons transferred, four hydrogen ions are translocated across the cytoplasmic membrane), and thus conserves the redox energy in a proton gradient. This is NADH-quinone oxidoreductase subunit B from Pelodictyon phaeoclathratiforme (strain DSM 5477 / BU-1).